A 234-amino-acid polypeptide reads, in one-letter code: Ponticulin-like protein J (234 aa).

Residues 1 to 20 form the signal peptide; the sequence is MRLLNNLILMVVLFVAVSNA. N-linked (GlcNAc...) asparagine glycans are attached at residues asparagine 19, asparagine 143, asparagine 166, and asparagine 206. Positions 115-213 are disordered; it reads TIKCGTLPPD…SDNETAEGNN (99 aa). The segment covering 154–195 has biased composition (low complexity); that stretch reads KSTPKSPSTPKTNNSNEDSDLTTSSSDSSSSTKSSPKSKSST. Asparagine 212 carries the GPI-like-anchor amidated asparagine lipid modification. A glycan (N-linked (GlcNAc...) asparagine) is linked at asparagine 213. Positions 213–234 are cleaved as a propeptide — removed in mature form; sequence NASSNIATFSLVIISLLVASLF.

Belongs to the ponticulin family. In terms of processing, the GPI-like-anchor contains a phosphoceramide group, rather than a phosphatidyl group.

Its subcellular location is the cell membrane. In terms of biological role, binds F-actin and nucleates actin assembly. The chain is Ponticulin-like protein J (ponJ) from Dictyostelium discoideum (Social amoeba).